The chain runs to 428 residues: Chaperone SurA (428 aa).

Positions 1-13 (MLGALLLSGAVHA) are cleaved as a signal peptide. PpiC domains follow at residues 164–265 (SEEF…KLLE) and 276–375 (RDEV…EVLG).

Its subcellular location is the periplasm. It carries out the reaction [protein]-peptidylproline (omega=180) = [protein]-peptidylproline (omega=0). Chaperone involved in the correct folding and assembly of outer membrane proteins. Recognizes specific patterns of aromatic residues and the orientation of their side chains, which are found more frequently in integral outer membrane proteins. May act in both early periplasmic and late outer membrane-associated steps of protein maturation. The polypeptide is Chaperone SurA (Pseudomonas syringae pv. tomato (strain ATCC BAA-871 / DC3000)).